The sequence spans 420 residues: rRNA methyltransferase 3, mitochondrial (420 aa).

A mitochondrion-targeting transit peptide spans 1-40; it reads MAALVRPARFVVRPLLQVVQAWDLDARRWVRALRRSPVKV. Residues 49 to 88 are disordered; sequence EQKRAPGKQPRKAPSEASAQEQREKQPLEESASRAPSTWE. The segment covering 69–80 has biased composition (basic and acidic residues); sequence EQREKQPLEESA. S-adenosyl-L-methionine is bound by residues G356, I380, and L389.

It belongs to the class IV-like SAM-binding methyltransferase superfamily. RNA methyltransferase TrmH family. In terms of tissue distribution, expressed at same level in normal liver and hepatocarcinoma.

The protein resides in the mitochondrion. The catalysed reaction is guanosine(1370) in 16S rRNA + S-adenosyl-L-methionine = 2'-O-methylguanosine(1370) in 16S rRNA + S-adenosyl-L-homocysteine + H(+). S-adenosyl-L-methionine-dependent 2'-O-ribose methyltransferase that catalyzes the formation of 2'-O-methylguanosine at position 1370 (Gm1370) in the 16S mitochondrial large subunit ribosomal RNA (mtLSU rRNA), a conserved modification in the peptidyl transferase domain of the mtLSU rRNA. Also required for formation of 2'-O-methyluridine at position 1369 (Um1369) mediated by MRM2. The sequence is that of rRNA methyltransferase 3, mitochondrial from Homo sapiens (Human).